The sequence spans 235 residues: Succinate dehydrogenase iron-sulfur subunit (235 aa).

Positions 53, 58, and 73 each coordinate [2Fe-2S] cluster. Positions 133–163 (ERAKLDGLYECILCACCSSSCPSYWWNPDKF) constitute a 4Fe-4S ferredoxin-type domain. The [4Fe-4S] cluster site is built by cysteine 143, cysteine 146, and cysteine 149. Position 153 (cysteine 153) interacts with [3Fe-4S] cluster. Tryptophan 158 lines the a ubiquinone pocket. 2 residues coordinate [3Fe-4S] cluster: cysteine 200 and cysteine 206. Cysteine 210 contacts [4Fe-4S] cluster.

This sequence belongs to the succinate dehydrogenase/fumarate reductase iron-sulfur protein family. In terms of assembly, part of an enzyme complex containing four subunits: a flavoprotein, an iron-sulfur protein, cytochrome b-556 and a hydrophobic protein. Requires [2Fe-2S] cluster as cofactor. It depends on [3Fe-4S] cluster as a cofactor. The cofactor is [4Fe-4S] cluster.

The catalysed reaction is a quinone + succinate = fumarate + a quinol. The protein operates within carbohydrate metabolism; tricarboxylic acid cycle; fumarate from succinate (bacterial route): step 1/1. The protein is Succinate dehydrogenase iron-sulfur subunit (sdhB) of Coxiella burnetii (strain RSA 493 / Nine Mile phase I).